A 394-amino-acid polypeptide reads, in one-letter code: Elongation factor Tu (394 aa).

The tr-type G domain occupies 10-204; sequence KPHVNVGTIG…ALDSYIPTPE (195 aa). The segment at 19–26 is G1; it reads GHVDHGKT. A GTP-binding site is contributed by 19–26; that stretch reads GHVDHGKT. Mg(2+) is bound at residue Thr26. The tract at residues 60–64 is G2; the sequence is GITIN. Residues 81-84 form a G3 region; it reads DCPG. GTP is bound by residues 81 to 85 and 136 to 139; these read DCPGH and NKCD. Positions 136 to 139 are G4; it reads NKCD. The segment at 174–176 is G5; that stretch reads SAL.

The protein belongs to the TRAFAC class translation factor GTPase superfamily. Classic translation factor GTPase family. EF-Tu/EF-1A subfamily. In terms of assembly, monomer.

It is found in the cytoplasm. The catalysed reaction is GTP + H2O = GDP + phosphate + H(+). GTP hydrolase that promotes the GTP-dependent binding of aminoacyl-tRNA to the A-site of ribosomes during protein biosynthesis. In Neisseria meningitidis serogroup A / serotype 4A (strain DSM 15465 / Z2491), this protein is Elongation factor Tu.